The sequence spans 807 residues: Lysyl oxidase homolog 3B (807 aa).

The first 24 residues, 1–24, serve as a signal peptide directing secretion; sequence MELHQWCRHIIVFLLNVWIPSCFA. SRCR domains follow at residues 49–150, 175–288, 309–409, 419–470, and 476–579; these read FRLS…VICK, VRLR…VSCV, TRLK…VRCN, VRIL…LGYA, and VRLS…VICS. 9 cysteine pairs are disulfide-bonded: Cys75–Cys139, Cys88–Cys149, Cys119–Cys129, Cys207–Cys277, Cys220–Cys287, Cys254–Cys264, Cys334–Cys398, Cys347–Cys408, and Cys378–Cys388. The N-linked (GlcNAc...) asparagine glycan is linked to Asn272. Asn392 carries an N-linked (GlcNAc...) asparagine glycan. 2 cysteine pairs are disulfide-bonded: Cys514–Cys578 and Cys547–Cys557. A glycan (N-linked (GlcNAc...) asparagine) is linked at Asn536. A glycan (N-linked (GlcNAc...) asparagine) is linked at Asn679. The lysine tyrosylquinone (Lys-Tyr) cross-link spans 688 to 724; that stretch reads KASFCLEDTDCDEGVSKRYKCANFGEQGITVGCWDLY. Tyr724 carries the post-translational modification 2',4',5'-topaquinone.

The protein belongs to the lysyl oxidase family. Cu cation serves as cofactor. Requires lysine tyrosylquinone residue as cofactor. In terms of processing, the lysine tyrosylquinone cross-link (LTQ) is generated by condensation of the epsilon-amino group of a lysine with a topaquinone produced by oxidation of tyrosine.

It is found in the secreted. It localises to the extracellular space. The protein resides in the cytoplasm. Its subcellular location is the nucleus. The catalysed reaction is L-lysyl-[protein] + O2 + H2O = (S)-2-amino-6-oxohexanoyl-[protein] + H2O2 + NH4(+). It carries out the reaction N(6)-acetyl-L-lysyl-[protein] + O2 + H2O = acetamide + (S)-2-amino-6-oxohexanoyl-[protein] + H2O2. Its function is as follows. Protein-lysine 6-oxidase that mediates the oxidation of peptidyl lysine residues to allysine in target proteins. Catalyzes the post-translational oxidative deamination of peptidyl lysine residues in precursors of elastin and different types of collagens, a prerequisite in the formation of cross-links between collagens and elastin. Can mediate oxidation of lysine residues that are acetylated. Also able to catalyze deacetylation of lysine residues. Required for maturation of neural crest derived cartilage elements. The protein is Lysyl oxidase homolog 3B of Danio rerio (Zebrafish).